The chain runs to 539 residues: Chaperonin GroEL (539 aa).

ATP-binding positions include 29–32, 86–90, glycine 413, 477–479, and aspartate 493; these read TLGP, DGTTT, and DAL.

The protein belongs to the chaperonin (HSP60) family. In terms of assembly, forms a cylinder of 14 subunits composed of two heptameric rings stacked back-to-back. Interacts with the co-chaperonin GroES.

The protein resides in the cytoplasm. The catalysed reaction is ATP + H2O + a folded polypeptide = ADP + phosphate + an unfolded polypeptide.. In terms of biological role, together with its co-chaperonin GroES, plays an essential role in assisting protein folding. The GroEL-GroES system forms a nano-cage that allows encapsulation of the non-native substrate proteins and provides a physical environment optimized to promote and accelerate protein folding. The protein is Chaperonin GroEL of Clostridium perfringens (strain ATCC 13124 / DSM 756 / JCM 1290 / NCIMB 6125 / NCTC 8237 / Type A).